A 986-amino-acid chain; its full sequence is Translation initiation factor IF-2 (986 aa).

The tract at residues 47 to 388 is disordered; sequence SAPAQTPHKE…RSKGRKGKYE (342 aa). Positions 53–64 are enriched in basic and acidic residues; it reads PHKEVSQEEVRV. The span at 78–94 shows a compositional bias: low complexity; it reads PEAASAEAASAPAAQEE. Over residues 95-113 the composition is skewed to basic and acidic residues; it reads APQKAEPEKVEAEKAEAPK. Composition is skewed to low complexity over residues 127-141 and 153-214; these read EAAP…PAEA and APVA…QAPA. Basic and acidic residues-rich tracts occupy residues 215–225 and 268–278; these read KAEEQEPEKAT and GVERPGTERPA. Over residues 286–300 the composition is skewed to low complexity; it reads PAGAPGRPGERPTTG. Over residues 358 to 374 the composition is skewed to basic and acidic residues; sequence GKKDSFKDILDKRERVF. In terms of domain architecture, tr-type G spans 486–653; that stretch reads KRPPVVTIMG…MVLLQADVLE (168 aa). Positions 495–502 are G1; that stretch reads GHVDHGKT. GTP is bound at residue 495-502; that stretch reads GHVDHGKT. A G2 region spans residues 520 to 524; sequence GITQH. Residues 541 to 544 form a G3 region; sequence DTPG. GTP is bound by residues 541-545 and 595-598; these read DTPGH and NKID. The G4 stretch occupies residues 595 to 598; it reads NKID. A G5 region spans residues 631–633; the sequence is SAK.

Belongs to the TRAFAC class translation factor GTPase superfamily. Classic translation factor GTPase family. IF-2 subfamily.

Its subcellular location is the cytoplasm. Its function is as follows. One of the essential components for the initiation of protein synthesis. Protects formylmethionyl-tRNA from spontaneous hydrolysis and promotes its binding to the 30S ribosomal subunits. Also involved in the hydrolysis of GTP during the formation of the 70S ribosomal complex. The sequence is that of Translation initiation factor IF-2 from Citrifermentans bemidjiense (strain ATCC BAA-1014 / DSM 16622 / JCM 12645 / Bem) (Geobacter bemidjiensis).